We begin with the raw amino-acid sequence, 748 residues long: MRRCGRLSGPPSLLLLLLLLSPLLFSGPGAYAARLSVLYSSSDPLTLLDADSVRPTVLGSSSAWAVEFFASWCGHCIAFAPTWKELANDVKDWRPALNLAVLDCAEETNSAVCREFNIAGFPTVRFFQAFTKNGSGATLPGAGANVQTLRMRLIDALESHRDTWPPACPPLEPAKLNDIDGFFTRNKADYLALVFEREDSYLGREVTLDLSQYHAVAVRRVLNTESDLVNKFGVTDFPSCYLLLRNGSVSRVPVLVESRSFYTSYLRGLPGLTRDAPPTTATPVTADKIAPTVWKFADRSKIYMADLESALHYILRVEVGKFSVLEGQRLVALKKFVAVLAKYFPGQPLVQNFLHSINDWLQKQQKKRIPYSFFKAALDSRKEDAVLTEKVNWVGCQGSEPHFRGFPCSLWVLFHFLTVQANRYSEAHPQEPADGQEVLQAMRSYVQFFFGCRDCADHFEQMAAASMHQVRSPSNAILWLWTSHNRVNARLSGALSEDPHFPKVQWPPRELCSACHNELNGQVPLWDLGATLNFLKAHFSPANIVIDSSASRHTGRRGSPEATPELVMDTLKLESRNSVLGHEQAASAESPGATALDVPAEKPEASGPQELYTGLRMGGASPGQGPPERMEDHQRDMQENAPGQQHLSKRDTEALFLPEVNHLQGPLELRRGGRSPKQLAPILEEEPEALAIQGQGQWLQVLGGGISHLDISLCVGLYSVSFMGLLAMYTYFRARLRTPKGHASYPTA.

A signal peptide spans 1–32 (MRRCGRLSGPPSLLLLLLLLSPLLFSGPGAYA). The Thioredoxin domain occupies 33–159 (ARLSVLYSSS…RMRLIDALES (127 aa)). Catalysis depends on nucleophile residues Cys-73 and Cys-76. 2 disulfides stabilise this stretch: Cys-73–Cys-76 and Cys-104–Cys-113. 2 N-linked (GlcNAc...) asparagine glycosylation sites follow: Asn-133 and Asn-246. Cysteines 396 and 408 form a disulfide. The ERV/ALR sulfhydryl oxidase domain occupies 399 to 506 (SEPHFRGFPC…EDPHFPKVQW (108 aa)). FAD is bound by residues Arg-404, Trp-411, His-415, Asp-454, His-458, 481 to 488 (WTSHNRVN), Lys-503, and Trp-506. The cysteines at positions 452 and 455 are disulfide-linked. Cys-512 and Cys-515 are oxidised to a cystine. Residues 581–647 (GHEQAASAES…QENAPGQQHL (67 aa)) are disordered. Basic and acidic residues predominate over residues 628 to 638 (ERMEDHQRDMQ). Residues 711 to 731 (ISLCVGLYSVSFMGLLAMYTY) traverse the membrane as a helical segment.

This sequence belongs to the quiescin-sulfhydryl oxidase (QSOX) family. In terms of assembly, monomer. The cofactor is FAD. In terms of processing, N-glycosylated. O-glycosylated on Thr and Ser residues. In terms of tissue distribution, detected in skin (at protein level). Expressed in the seminal vesicles and skin.

The protein resides in the golgi apparatus membrane. It localises to the secreted. It catalyses the reaction 2 R'C(R)SH + O2 = R'C(R)S-S(R)CR' + H2O2. Catalyzes the oxidation of sulfhydryl groups in peptide and protein thiols to disulfides with the reduction of oxygen to hydrogen peroxide. Plays a role in disulfide bond formation in a variety of extracellular proteins. In fibroblasts, required for normal incorporation of laminin into the extracellular matrix, and thereby for normal cell-cell adhesion and cell migration. The polypeptide is Sulfhydryl oxidase 1 (Qsox1) (Mus musculus (Mouse)).